A 144-amino-acid chain; its full sequence is Eukaryotic translation initiation factor 1A (144 aa).

Residues 1 to 15 (MPKNKGKGGKNRKRG) show a composition bias toward basic residues. Disordered stretches follow at residues 1 to 25 (MPKN…DKRE) and 120 to 144 (DVDG…IDKI). A compositionally biased stretch (basic and acidic residues) spans 16-25 (KNEADDDKRE). The S1-like domain occupies 22–96 (DKRELVFKED…DKADVILKYM (75 aa)).

Belongs to the eIF-1A family.

Functionally, seems to be required for maximal rate of protein biosynthesis. Enhances ribosome dissociation into subunits and stabilizes the binding of the initiator Met-tRNA(I) to 40 S ribosomal subunits. This Triticum aestivum (Wheat) protein is Eukaryotic translation initiation factor 1A.